The following is a 389-amino-acid chain: NADH-quinone oxidoreductase subunit D (389 aa).

This sequence belongs to the complex I 49 kDa subunit family. In terms of assembly, NDH-1 is composed of 14 different subunits. Subunits NuoB, C, D, E, F, and G constitute the peripheral sector of the complex.

The protein localises to the cell inner membrane. It catalyses the reaction a quinone + NADH + 5 H(+)(in) = a quinol + NAD(+) + 4 H(+)(out). NDH-1 shuttles electrons from NADH, via FMN and iron-sulfur (Fe-S) centers, to quinones in the respiratory chain. The immediate electron acceptor for the enzyme in this species is believed to be ubiquinone. Couples the redox reaction to proton translocation (for every two electrons transferred, four hydrogen ions are translocated across the cytoplasmic membrane), and thus conserves the redox energy in a proton gradient. This Citrifermentans bemidjiense (strain ATCC BAA-1014 / DSM 16622 / JCM 12645 / Bem) (Geobacter bemidjiensis) protein is NADH-quinone oxidoreductase subunit D.